Reading from the N-terminus, the 2713-residue chain is Histone-lysine N-methyltransferase 2B (2713 aa).

A compositionally biased stretch (gly residues) spans Met-1–Pro-11. 3 disordered regions span residues Met-1–Thr-65, Arg-82–Val-524, and Val-542–Ala-783. An N-acetylalanine modification is found at Ala-2. The segment covering Gly-12–Pro-24 has biased composition (low complexity). A Menin-binding motif (MBM) motif is present at residues Arg-17–Arg-36. 2 stretches are compositionally biased toward gly residues: residues Arg-25–Asn-38 and Arg-49–Glu-60. A DNA-binding region (a.T hook 1) is located at residues Gly-37 to Arg-44. A compositionally biased stretch (acidic residues) spans Pro-109 to Phe-123. The segment at residues Glu-110–Glu-117 is a DNA-binding region (a.T hook 2). Ser-113, Ser-114, and Ser-118 each carry phosphoserine. Residues Gln-144–Thr-158 show a composition bias toward basic residues. Over residues Pro-340–Lys-360 the composition is skewed to basic and acidic residues. A DNA-binding region (a.T hook 3) is located at residues Gln-357–Glu-365. Residues Leu-361–Thr-393 show a composition bias toward acidic residues. Positions Glu-394 to Lys-412 are enriched in basic and acidic residues. A compositionally biased stretch (pro residues) spans Pro-414–Ala-460. The segment covering Gly-501–Leu-517 has biased composition (low complexity). Positions Arg-555–Lys-566 are enriched in basic and acidic residues. A compositionally biased stretch (pro residues) spans Ala-577 to Leu-605. The segment covering Pro-606–Thr-617 has biased composition (basic and acidic residues). Residues Leu-627–Ala-645 show a composition bias toward pro residues. 3 stretches are compositionally biased toward low complexity: residues Thr-646 to Pro-657, Val-715 to Pro-728, and Gln-738 to Gln-756. The segment covering Ala-757–Thr-774 has biased composition (pro residues). Lys-810 is covalently cross-linked (Glycyl lysine isopeptide (Lys-Gly) (interchain with G-Cter in SUMO2)). Ser-826, Ser-849, and Ser-866 each carry phosphoserine. Disordered regions lie at residues Thr-831 to Arg-872 and Ser-899 to Lys-964. Residues Thr-841–Ser-862 are compositionally biased toward basic and acidic residues. The segment covering Glu-912–Ser-922 has biased composition (low complexity). Ser-941 bears the Phosphoserine mark. Over residues Thr-953–Lys-964 the composition is skewed to basic residues. The segment at Lys-964–Asp-1011 adopts a CXXC-type zinc-finger fold. Cys-971, Cys-974, Cys-977, Cys-983, Cys-986, Cys-989, Cys-1005, and Cys-1010 together coordinate Zn(2+). Disordered regions lie at residues Leu-1032 to Leu-1076 and Gln-1088 to Val-1138. 4 positions are modified to phosphoserine: Ser-1037, Ser-1040, Ser-1098, and Ser-1101. A Glycyl lysine isopeptide (Lys-Gly) (interchain with G-Cter in SUMO2) cross-link involves residue Lys-1142. 3 consecutive PHD-type zinc fingers follow at residues Pro-1207–Cys-1258, Cys-1255–Cys-1309, and Gly-1341–Ala-1402. One can recognise a Bromo domain in the interval Ala-1410–Ala-1510. Residues Arg-1550–Ser-1572 form a disordered region. A C2HC pre-PHD-type zinc finger spans residues Pro-1584 to Val-1624. Residues Met-1645 to Thr-1692 form a PHD-type 4 zinc finger. One can recognise an FYR N-terminal domain in the interval Val-1733–Tyr-1789. Polar residues predominate over residues Gln-1808–Asp-1821. 5 disordered regions span residues Gln-1808–Phe-1973, Gln-2056–Asp-2104, Asn-2116–Ala-2160, Val-2279–Leu-2356, and Tyr-2382–Val-2408. Composition is skewed to low complexity over residues Pro-1872–Leu-1890 and Arg-1923–Pro-1933. Ser-1926 and Ser-1932 each carry phosphoserine. Over residues Leu-1939–Ser-1950 the composition is skewed to polar residues. A compositionally biased stretch (acidic residues) spans Asp-2058–Ala-2068. Residues Thr-2064 and Thr-2079 each carry the phosphothreonine modification. Gly residues predominate over residues Pro-2084–Gly-2093. The segment covering Asn-2140–Ala-2153 has biased composition (polar residues). A phosphoserine mark is found at Ser-2286 and Ser-2346. Residues Gly-2409–Tyr-2490 form the FYR C-terminal domain. The WDR5 interaction motif (WIN) motif lies at Gly-2506 to Glu-2511. Residues Glu-2573–Lys-2689 enclose the SET domain. S-adenosyl-L-methionine is bound by residues His-2583, Arg-2585, Tyr-2627, and Asn-2650–His-2651. 2 residues coordinate Zn(2+): Cys-2653 and Cys-2701. One can recognise a Post-SET domain in the interval Asn-2697–Asn-2713. S-adenosyl-L-methionine is bound at residue Asn-2702. Zn(2+)-binding residues include Cys-2703 and Cys-2708.

The protein belongs to the class V-like SAM-binding methyltransferase superfamily. Histone-lysine methyltransferase family. TRX/MLL subfamily. As to quaternary structure, component of the menin-associated histone methyltransferase complex, at least composed of KMT2B/MLL4, ASH2L, RBBP5, WDR5, DPY30, MEN1; the complex interacts with POLR2A and POLR2B via MEN1. Interacts with NFE2. Interacts with KDM6B. Interacts (via WIN motif) with WDR5. Interacts (via MBM motif) with MEN1.

It is found in the nucleus. The enzyme catalyses L-lysyl(4)-[histone H3] + S-adenosyl-L-methionine = N(6)-methyl-L-lysyl(4)-[histone H3] + S-adenosyl-L-homocysteine + H(+). It carries out the reaction N(6)-methyl-L-lysyl(4)-[histone H3] + S-adenosyl-L-methionine = N(6),N(6)-dimethyl-L-lysyl(4)-[histone H3] + S-adenosyl-L-homocysteine + H(+). Functionally, histone methyltransferase that catalyzes methyl group transfer from S-adenosyl-L-methionine to the epsilon-amino group of 'Lys-4' of histone H3 (H3K4) via a non-processive mechanism. Part of chromatin remodeling machinery predominantly forms H3K4me1 and H3K4me2 methylation marks at active chromatin sites where transcription and DNA repair take place. Likely plays a redundant role with KMT2C in enriching H3K4me1 marks on primed and active enhancer elements. Plays a central role in beta-globin locus transcription regulation by being recruited by NFE2. Plays an important role in controlling bulk H3K4me during oocyte growth and preimplantation development. Required during the transcriptionally active period of oocyte growth for the establishment and/or maintenance of bulk H3K4 trimethylation (H3K4me3), global transcriptional silencing that preceeds resumption of meiosis, oocyte survival and normal zygotic genome activation. The chain is Histone-lysine N-methyltransferase 2B (Kmt2b) from Mus musculus (Mouse).